The sequence spans 247 residues: Disease resistance protein BAK6 (247 aa).

An N-terminal signal peptide occupies residues 1-24 (MAAVQFAAAGVLTGLLALATLASC). 3 N-linked (GlcNAc...) asparagine glycosylation sites follow: N66, N104, and N113. LRR repeat units lie at residues 90 to 114 (LESLQYMELFGNSLNGSIPSTLGNL), 116 to 138 (DLISLDLWDNLLTGPIPTTLGSI), 139 to 161 (STLRYLRLYENNLTGPIPPSFGN), 162 to 186 (LTSLLELKLHRNSLSGSIPASLGNI), 188 to 210 (SLQFLKLNENMLTGTVPLEVLSL), and 213 to 237 (VGNLTELNIARNNLDGTVRSSGLRV). N-linked (GlcNAc...) asparagine glycosylation is found at N150 and N161. N215 carries an N-linked (GlcNAc...) asparagine glycan.

In terms of assembly, interacts with WAK17 isoform 1; the interaction is direct. As to quaternary structure, (Microbial infection) Interacts with G.zeae CFEM1; the interaction is direct. Interacts with G.zeae CFEMN1; the interaction is direct. Interacts with G.zeae CFEM5; the interaction is direct.

Contributes to activation of the hypersensitive response, a form of programmed cell death, upon fungal infection. May sense the presence of fungal material and relay the signal to WAK17 isoform 1. This is Disease resistance protein BAK6 from Zea mays (Maize).